A 244-amino-acid polypeptide reads, in one-letter code: Carbonyl reductase [NADPH] 2 (244 aa).

11-39 is a binding site for NADP(+); it reads LVTGAGKGIGRDTVKALHVSGARVVAVTR. Ser136 is a substrate binding site. Catalysis depends on Tyr149, which acts as the Proton acceptor. Ser176 is subject to Phosphoserine.

It belongs to the short-chain dehydrogenases/reductases (SDR) family. As to quaternary structure, homotetramer. In terms of tissue distribution, lung (ciliated cells, non-ciliated bronchiolar cells and type-II alveolar pneumocytes). Low expression in all extrapulmonary tissues, including adipose tissue.

It localises to the mitochondrion matrix. The enzyme catalyses a secondary alcohol + NADP(+) = a ketone + NADPH + H(+). Allosteric enzyme exhibiting negative cooperativity. Activated 2-5 fold by fatty acids. Functionally, may function in the pulmonary metabolism of endogenous carbonyl compounds, such as aliphatic aldehydes and ketones derived from lipid peroxidation, 3-ketosteroids and fatty aldehydes, as well as in xenobiotic metabolism. This is Carbonyl reductase [NADPH] 2 (CBR2) from Sus scrofa (Pig).